A 292-amino-acid chain; its full sequence is Non-homologous end joining protein Ku (292 aa).

The region spanning 12-196 (KLSLVTCPVV…KITKDMVELA (185 aa)) is the Ku domain. Residues 231-292 (KPIKLPEPEE…RSAARQRKAG (62 aa)) form a disordered region. Positions 271–292 (APAHRRPAKKAHRSAARQRKAG) are enriched in basic residues.

The protein belongs to the prokaryotic Ku family. Homodimer. Interacts with LigD.

Its function is as follows. With LigD forms a non-homologous end joining (NHEJ) DNA repair enzyme, which repairs dsDNA breaks with reduced fidelity. Binds linear dsDNA with 5'- and 3'- overhangs but not closed circular dsDNA nor ssDNA. Recruits and stimulates the ligase activity of LigD. This Bradyrhizobium sp. (strain ORS 278) protein is Non-homologous end joining protein Ku.